A 1282-amino-acid polypeptide reads, in one-letter code: Protein PIR (1282 aa).

In terms of assembly, binds NAP1 and ROP2, but not ROP8. In terms of tissue distribution, expressed in roots, root hairs, hypocotyls, cotyledons, stems, leaves, trichomes and flowers.

Its function is as follows. Involved in regulation of actin and microtubule organization. Part of a WAVE complex that activates the ARP2/3 complex. Interacts with the active form of RHO-family GTPases. This chain is Protein PIR (PIR), found in Arabidopsis thaliana (Mouse-ear cress).